The sequence spans 61 residues: Large ribosomal subunit protein bL28 (61 aa).

A disordered region spans residues 1 to 26 (MAKDYVTGKRTHFGNTRSHALNHSRR).

Belongs to the bacterial ribosomal protein bL28 family.

This chain is Large ribosomal subunit protein bL28, found in Lactiplantibacillus plantarum (strain ATCC BAA-793 / NCIMB 8826 / WCFS1) (Lactobacillus plantarum).